The following is a 507-amino-acid chain: ATP synthase subunit alpha 2 (507 aa).

ATP is bound at residue 171-178 (GDRATGKT).

Belongs to the ATPase alpha/beta chains family. As to quaternary structure, F-type ATPases have 2 components, CF(1) - the catalytic core - and CF(0) - the membrane proton channel. CF(1) has five subunits: alpha(3), beta(3), gamma(1), delta(1), epsilon(1). CF(0) has three main subunits: a(1), b(2) and c(9-12). The alpha and beta chains form an alternating ring which encloses part of the gamma chain. CF(1) is attached to CF(0) by a central stalk formed by the gamma and epsilon chains, while a peripheral stalk is formed by the delta and b chains.

The protein resides in the cell inner membrane. It catalyses the reaction ATP + H2O + 4 H(+)(in) = ADP + phosphate + 5 H(+)(out). Produces ATP from ADP in the presence of a proton gradient across the membrane. The alpha chain is a regulatory subunit. The sequence is that of ATP synthase subunit alpha 2 from Gluconobacter oxydans (strain 621H) (Gluconobacter suboxydans).